A 513-amino-acid polypeptide reads, in one-letter code: ATP synthase subunit alpha 2 (513 aa).

Residue G169–T176 coordinates ATP.

This sequence belongs to the ATPase alpha/beta chains family. In terms of assembly, F-type ATPases have 2 components, CF(1) - the catalytic core - and CF(0) - the membrane proton channel. CF(1) has five subunits: alpha(3), beta(3), gamma(1), delta(1), epsilon(1). CF(0) has three main subunits: a(1), b(2) and c(9-12). The alpha and beta chains form an alternating ring which encloses part of the gamma chain. CF(1) is attached to CF(0) by a central stalk formed by the gamma and epsilon chains, while a peripheral stalk is formed by the delta and b chains.

It is found in the cell inner membrane. The enzyme catalyses ATP + H2O + 4 H(+)(in) = ADP + phosphate + 5 H(+)(out). Produces ATP from ADP in the presence of a proton gradient across the membrane. The alpha chain is a regulatory subunit. The chain is ATP synthase subunit alpha 2 from Pseudoalteromonas atlantica (strain T6c / ATCC BAA-1087).